Reading from the N-terminus, the 404-residue chain is Glucose-1-phosphate adenylyltransferase 2 (404 aa).

Residues Tyr97, Gly162, 177–178 (EK), and Ser195 each bind alpha-D-glucose 1-phosphate.

It belongs to the bacterial/plant glucose-1-phosphate adenylyltransferase family. Homotetramer.

It carries out the reaction alpha-D-glucose 1-phosphate + ATP + H(+) = ADP-alpha-D-glucose + diphosphate. It functions in the pathway glycan biosynthesis; glycogen biosynthesis. Its function is as follows. Involved in the biosynthesis of ADP-glucose, a building block required for the elongation reactions to produce glycogen. Catalyzes the reaction between ATP and alpha-D-glucose 1-phosphate (G1P) to produce pyrophosphate and ADP-Glc. In Vibrio vulnificus (strain YJ016), this protein is Glucose-1-phosphate adenylyltransferase 2.